The primary structure comprises 398 residues: Tryptophan synthase beta chain (398 aa).

Lys90 is subject to N6-(pyridoxal phosphate)lysine.

Belongs to the TrpB family. Tetramer of two alpha and two beta chains. Pyridoxal 5'-phosphate is required as a cofactor.

It catalyses the reaction (1S,2R)-1-C-(indol-3-yl)glycerol 3-phosphate + L-serine = D-glyceraldehyde 3-phosphate + L-tryptophan + H2O. It participates in amino-acid biosynthesis; L-tryptophan biosynthesis; L-tryptophan from chorismate: step 5/5. The beta subunit is responsible for the synthesis of L-tryptophan from indole and L-serine. The protein is Tryptophan synthase beta chain of Anoxybacillus flavithermus (strain DSM 21510 / WK1).